Consider the following 468-residue polypeptide: Protein NEN1 (468 aa).

The Exonuclease domain occupies 11–172; it reads FFDVETTVPK…DDVRMNLEVL (162 aa). Mg(2+) is bound by residues Asp-13 and Glu-15. Catalysis depends on His-159, which acts as the Proton donor/acceptor. A Mg(2+)-binding site is contributed by Asp-164.

It depends on Mg(2+) as a cofactor. Expressed in the sieve elements and phloem pole pericycle cells.

Its subcellular location is the cytoplasm. The protein localises to the nucleus. Its function is as follows. Probable exonuclease involved in enuclation of sieve elements. The chain is Protein NEN1 from Arabidopsis thaliana (Mouse-ear cress).